Here is a 299-residue protein sequence, read N- to C-terminus: tRNA pseudouridine synthase A (299 aa).

Residue Asp-67 is the Nucleophile of the active site. Tyr-125 lines the substrate pocket.

Belongs to the tRNA pseudouridine synthase TruA family. As to quaternary structure, homodimer.

It catalyses the reaction uridine(38/39/40) in tRNA = pseudouridine(38/39/40) in tRNA. In terms of biological role, formation of pseudouridine at positions 38, 39 and 40 in the anticodon stem and loop of transfer RNAs. This is tRNA pseudouridine synthase A from Parasynechococcus marenigrum (strain WH8102).